Reading from the N-terminus, the 227-residue chain is Eukaryotic translation initiation factor 4E-1 (227 aa).

The tract at residues 1-52 (MAEEHETRPPSAGRPPSSGRGRADDADEREEGEIADDDSGHAPPQANPAAPH) is disordered. Over residues 9–20 (PPSAGRPPSSGR) the composition is skewed to low complexity. A compositionally biased stretch (acidic residues) spans 25–37 (DADEREEGEIADD). EIF4G-binding stretches follow at residues 52-55 (HPLE) and 62-98 (FDNP…NNIH). MRNA is bound by residues 70-75 (KQATWG), Lys-102, and 120-121 (WE). A disulfide bridge connects residues Cys-125 and Cys-163. An EIF4G-binding region spans residues 146-155 (HTLLAMIGEQ). MRNA is bound by residues 170–175 (RGKQER) and 215–219 (KKMDK).

The protein belongs to the eukaryotic initiation factor 4E family. As to quaternary structure, EIF4F is a multi-subunit complex, the composition of which varies with external and internal environmental conditions. It is composed of at least EIF4A, EIF4E and EIF4G. EIF4E is also known to interact with other partners. In higher plants two isoforms of EIF4F have been identified, named isoform EIF4F and isoform EIF(iso)4F. Isoform EIF4F has subunits p220 and p26, whereas isoform EIF(iso)4F has subunits p82 and p28. According to the redox status, the Cys-125-Cys-163 disulfide bridge may have a role in regulating protein function by affecting its ability to bind capped mRNA.

Its subcellular location is the nucleus. The protein localises to the cytoplasm. Functionally, component of the protein complex eIF4F, which is involved in the recognition of the mRNA cap, ATP-dependent unwinding of 5'-terminal secondary structure and recruitment of mRNA to the ribosome. Recognizes and binds the 7-methylguanosine-containing mRNA cap during an early step in the initiation of protein synthesis and facilitates ribosome binding by inducing the unwinding of the mRNAs secondary structures. The sequence is that of Eukaryotic translation initiation factor 4E-1 from Oryza sativa subsp. japonica (Rice).